The primary structure comprises 345 residues: Dihydroorotase (345 aa).

Residues His-14 and His-16 each contribute to the Zn(2+) site. Residues 16 to 18 (HLR) and Asn-42 each bind substrate. The Zn(2+) site is built by Lys-102, His-139, and His-177. Position 102 is an N6-carboxylysine (Lys-102). Residue His-139 participates in substrate binding. Substrate is bound at residue Leu-222. Asp-250 is a Zn(2+) binding site. Asp-250 is a catalytic residue. Substrate contacts are provided by His-254 and Ala-266.

The protein belongs to the metallo-dependent hydrolases superfamily. DHOase family. Class II DHOase subfamily. Homodimer. It depends on Zn(2+) as a cofactor.

The enzyme catalyses (S)-dihydroorotate + H2O = N-carbamoyl-L-aspartate + H(+). The protein operates within pyrimidine metabolism; UMP biosynthesis via de novo pathway; (S)-dihydroorotate from bicarbonate: step 3/3. Functionally, catalyzes the reversible cyclization of carbamoyl aspartate to dihydroorotate. The protein is Dihydroorotase of Nitrosomonas eutropha (strain DSM 101675 / C91 / Nm57).